The chain runs to 597 residues: Kelch-like protein 21 (597 aa).

Residues L35 to G103 enclose the BTB domain. The region spanning C138 to E239 is the BACK domain. Kelch repeat units follow at residues I287–N335, D336–G382, L384–G422, R423–G470, M472–G512, and K513–R560. Residues G570–Q597 are disordered.

Component of the BCR(KLHL21) E3 ubiquitin ligase complex, at least composed of CUL3, KLHL21 and RBX1.

Its subcellular location is the cytoplasm. The protein resides in the cytoskeleton. It localises to the spindle. Its pathway is protein modification; protein ubiquitination. Its function is as follows. Substrate-specific adapter of BCR (BTB-CUL3-RBX1) E3 ubiquitin-protein ligase complex required for efficient chromosome alignment and cytokinesis. The BCR(KLHL21) E3 ubiquitin ligase complex regulates localization of the chromosomal passenger complex (CPC) from chromosomes to the spindle midzone in anaphase and mediates the ubiquitination of AURKB. Ubiquitination of AURKB by BCR(KLHL21) E3 ubiquitin ligase complex may not lead to its degradation by the proteasome. The protein is Kelch-like protein 21 (Klhl21) of Rattus norvegicus (Rat).